The sequence spans 360 residues: Peptide chain release factor 1 (360 aa).

An N5-methylglutamine modification is found at Q235. The segment covering 291-308 has biased composition (basic and acidic residues); that stretch reads ASERRNLLGTGDRSDRNR. Residues 291–312 are disordered; the sequence is ASERRNLLGTGDRSDRNRTYNF.

The protein belongs to the prokaryotic/mitochondrial release factor family. Methylated by PrmC. Methylation increases the termination efficiency of RF1.

The protein resides in the cytoplasm. In terms of biological role, peptide chain release factor 1 directs the termination of translation in response to the peptide chain termination codons UAG and UAA. The polypeptide is Peptide chain release factor 1 (Yersinia pseudotuberculosis serotype I (strain IP32953)).